Consider the following 2260-residue polypeptide: Protein Ycf2 (2260 aa).

1614-1621 (GSIGTGRS) contributes to the ATP binding site.

Belongs to the Ycf2 family.

It localises to the plastid. Its subcellular location is the chloroplast stroma. Probable ATPase of unknown function. Its presence in a non-photosynthetic plant (Epifagus virginiana) and experiments in tobacco indicate that it has an essential function which is probably not related to photosynthesis. This chain is Protein Ycf2, found in Dioscorea elephantipes (Elephant's foot yam).